A 290-amino-acid polypeptide reads, in one-letter code: Probable branched-chain-amino-acid aminotransferase (290 aa).

Lys-155 carries the N6-(pyridoxal phosphate)lysine modification.

The protein belongs to the class-IV pyridoxal-phosphate-dependent aminotransferase family. The cofactor is pyridoxal 5'-phosphate.

It carries out the reaction L-leucine + 2-oxoglutarate = 4-methyl-2-oxopentanoate + L-glutamate. The enzyme catalyses L-isoleucine + 2-oxoglutarate = (S)-3-methyl-2-oxopentanoate + L-glutamate. The catalysed reaction is L-valine + 2-oxoglutarate = 3-methyl-2-oxobutanoate + L-glutamate. Its pathway is amino-acid biosynthesis; L-isoleucine biosynthesis; L-isoleucine from 2-oxobutanoate: step 4/4. The protein operates within amino-acid biosynthesis; L-leucine biosynthesis; L-leucine from 3-methyl-2-oxobutanoate: step 4/4. It participates in amino-acid biosynthesis; L-valine biosynthesis; L-valine from pyruvate: step 4/4. Functionally, acts on leucine, isoleucine and valine. This Rickettsia conorii (strain ATCC VR-613 / Malish 7) protein is Probable branched-chain-amino-acid aminotransferase (ilvE).